Consider the following 350-residue polypeptide: Putative ATP-binding protein BRA0745/BS1330_II0738 (350 aa).

One can recognise an ABC transporter domain in the interval V4–I234. Position 36 to 43 (G36 to S43) interacts with ATP.

The protein belongs to the ABC transporter superfamily. The complex is composed of two ATP-binding proteins (BRA0745), two transmembrane proteins (BRA0749) and a solute-binding protein (BRA0748).

The protein resides in the cell inner membrane. Its function is as follows. Probably part of an ABC transporter complex. Probably responsible for energy coupling to the transport system. The protein is Putative ATP-binding protein BRA0745/BS1330_II0738 of Brucella suis biovar 1 (strain 1330).